A 707-amino-acid chain; its full sequence is Transcription termination factor Rho (707 aa).

2 disordered regions span residues M1–T38 and Q76–Q321. Low complexity-rich tracts occupy residues A16–G31 and Q76–A93. Residues R107 to A132 show a composition bias toward basic and acidic residues. Residues A153–D163 are compositionally biased toward low complexity. The segment covering D176 to A188 has biased composition (polar residues). Residues Q203–G213 are compositionally biased toward low complexity. The segment covering A215–D265 has biased composition (basic and acidic residues). The segment covering R301–R315 has biased composition (basic residues). In terms of domain architecture, Rho RNA-BD spans L331–A406. ATP is bound by residues G449 to G454, K461 to M466, and R492.

The protein belongs to the Rho family. In terms of assembly, homohexamer. The homohexamer assembles into an open ring structure.

Its function is as follows. Facilitates transcription termination by a mechanism that involves Rho binding to the nascent RNA, activation of Rho's RNA-dependent ATPase activity, and release of the mRNA from the DNA template. In Streptomyces lividans, this protein is Transcription termination factor Rho.